The primary structure comprises 287 residues: 4-hydroxybenzoate octaprenyltransferase (287 aa).

The next 6 membrane-spanning stretches (helical) occupy residues valine 41 to isoleucine 61, valine 92 to leucine 112, phenylalanine 133 to phenylalanine 153, valine 160 to threonine 180, threonine 197 to threonine 217, and asparagine 267 to phenylalanine 287.

This sequence belongs to the UbiA prenyltransferase family. Mg(2+) serves as cofactor.

It localises to the cell inner membrane. It carries out the reaction all-trans-octaprenyl diphosphate + 4-hydroxybenzoate = 4-hydroxy-3-(all-trans-octaprenyl)benzoate + diphosphate. It participates in cofactor biosynthesis; ubiquinone biosynthesis. Its function is as follows. Catalyzes the prenylation of para-hydroxybenzoate (PHB) with an all-trans polyprenyl group. Mediates the second step in the final reaction sequence of ubiquinone-8 (UQ-8) biosynthesis, which is the condensation of the polyisoprenoid side chain with PHB, generating the first membrane-bound Q intermediate 3-octaprenyl-4-hydroxybenzoate. This is 4-hydroxybenzoate octaprenyltransferase from Paraburkholderia phymatum (strain DSM 17167 / CIP 108236 / LMG 21445 / STM815) (Burkholderia phymatum).